Here is a 1116-residue protein sequence, read N- to C-terminus: Rho GTPase-activating protein 45 (1116 aa).

Residues 1–72 (MFSRKKRELM…RPTSLSRHAS (72 aa)) form a disordered region. Residues 22-31 (GSPNPQSSSG) are compositionally biased toward polar residues. Residues Ser-23, Ser-72, Ser-92, and Ser-98 each carry the phosphoserine modification. The F-BAR domain occupies 268–538 (EEVDMLLQRC…SSKLYDPGQQ (271 aa)). A coiled-coil region spans residues 375–498 (EHERRRKEIK…QIQEVIRQSD (124 aa)). Positions 422–457 (VAKAEEEQQGTGPGAGTAASKALDKRRRLEEEAKNK) are disordered. A compositionally biased stretch (basic and acidic residues) spans 448-457 (RRLEEEAKNK). Phosphoserine occurs at positions 568, 577, 591, and 618. Positions 569 to 658 (PIMRTRKGSF…MSSSEELGDQ (90 aa)) are disordered. The segment covering 621–635 (ISISDTEVGLDTSSG) has biased composition (polar residues). Positions 643–652 (TSSSGTMSSS) are enriched in low complexity. The Phorbol-ester/DAG-type zinc-finger motif lies at 699–744 (THRLRKLRTPAKCRECNSYVYFQGAECEECCLACHKKCLETLAIQC). The Rho-GAP domain occupies 758-971 (QDFSQAALST…TLIVHYGLVF (214 aa)). Residues Ser-946, Ser-1017, Ser-1020, and Ser-1022 each carry the phosphoserine modification. 2 disordered regions span residues 1004 to 1035 (EEAE…SSSD) and 1050 to 1116 (AGLE…PQFV). Composition is skewed to polar residues over residues 1080 to 1090 (FNTNQSNNTSR) and 1105 to 1116 (GGTSQERQPQFV).

Its subcellular location is the cytoplasm. The protein localises to the cell projection. It is found in the ruffle membrane. Contains a GTPase activator for the Rho-type GTPases (RhoGAP) domain that would be able to negatively regulate the actin cytoskeleton as well as cell spreading. However, also contains N-terminally a BAR-domin which is able to play an autoinhibitory effect on this RhoGAP activity. This chain is Rho GTPase-activating protein 45, found in Mus musculus (Mouse).